A 725-amino-acid polypeptide reads, in one-letter code: Fatty acid oxidation complex subunit alpha (725 aa).

Residues 1–189 (MLYKGDTLYL…KIGLVDGVVK (189 aa)) form an enoyl-CoA hydratase/isomerase region. Position 296 (D296) interacts with substrate. Residues 311-725 (ETPKQAAVLG…RLNQPVRLVL (415 aa)) are 3-hydroxyacyl-CoA dehydrogenase. Residues M324, D343, 400–402 (VVE), K407, and S429 each bind NAD(+). The active-site For 3-hydroxyacyl-CoA dehydrogenase activity is H450. N453 contributes to the NAD(+) binding site. The substrate site is built by N500 and Y660.

It in the N-terminal section; belongs to the enoyl-CoA hydratase/isomerase family. In the C-terminal section; belongs to the 3-hydroxyacyl-CoA dehydrogenase family. In terms of assembly, heterotetramer of two alpha chains (FadB) and two beta chains (FadA).

It carries out the reaction a (3S)-3-hydroxyacyl-CoA + NAD(+) = a 3-oxoacyl-CoA + NADH + H(+). It catalyses the reaction a (3S)-3-hydroxyacyl-CoA = a (2E)-enoyl-CoA + H2O. The enzyme catalyses a 4-saturated-(3S)-3-hydroxyacyl-CoA = a (3E)-enoyl-CoA + H2O. The catalysed reaction is (3S)-3-hydroxybutanoyl-CoA = (3R)-3-hydroxybutanoyl-CoA. It carries out the reaction a (3Z)-enoyl-CoA = a 4-saturated (2E)-enoyl-CoA. It catalyses the reaction a (3E)-enoyl-CoA = a 4-saturated (2E)-enoyl-CoA. It participates in lipid metabolism; fatty acid beta-oxidation. Involved in the aerobic and anaerobic degradation of long-chain fatty acids via beta-oxidation cycle. Catalyzes the formation of 3-oxoacyl-CoA from enoyl-CoA via L-3-hydroxyacyl-CoA. It can also use D-3-hydroxyacyl-CoA and cis-3-enoyl-CoA as substrate. The polypeptide is Fatty acid oxidation complex subunit alpha (Salmonella paratyphi A (strain ATCC 9150 / SARB42)).